A 230-amino-acid chain; its full sequence is Potassium/proton antiporter CemA (230 aa).

A run of 4 helical transmembrane segments spans residues 7–27, 106–126, 145–165, and 181–201; these read LPSF…SFSF, IILH…SFFL, LNDS…VGFH, and LGWV…PVIL.

Belongs to the CemA family.

Its subcellular location is the plastid. The protein resides in the chloroplast inner membrane. The catalysed reaction is K(+)(in) + H(+)(out) = K(+)(out) + H(+)(in). Its function is as follows. Contributes to K(+)/H(+) antiport activity by supporting proton efflux to control proton extrusion and homeostasis in chloroplasts in a light-dependent manner to modulate photosynthesis. Prevents excessive induction of non-photochemical quenching (NPQ) under continuous-light conditions. Indirectly promotes efficient inorganic carbon uptake into chloroplasts. In Oryza nivara (Indian wild rice), this protein is Potassium/proton antiporter CemA.